The following is a 261-amino-acid chain: U11/U12 small nuclear ribonucleoprotein 31 kDa protein (261 aa).

The interval 18–51 (YYRYSSVAAPPPSNPKHQPSSSAKSSAPGGGSGG) is disordered. An RRM domain is found at 57 to 135 (STLYVSNLDF…RKLTVSIAAD (79 aa)). Residues 153-169 (RCYECGDEGHLSYECPK) form a CCHC-type zinc finger. The tract at residues 165–261 (YECPKNQLGP…YFSDESDDED (97 aa)) is disordered. Residues 226–235 (AGERLRKREA) are compositionally biased toward basic and acidic residues.

As to quaternary structure, component of the U11/U12 snRNPs that are part of the U12-type spliceosome. As to expression, ubiquitous. Abundantly expressed in the shoot apical neristem.

It localises to the nucleus. Its function is as follows. RNA chaperone required for proper U12 intron splicing and for normal growth and development of plants. Mainly responsible for meristem activity. Plays a role in regulating cell division. This Arabidopsis thaliana (Mouse-ear cress) protein is U11/U12 small nuclear ribonucleoprotein 31 kDa protein (SNRNP31).